We begin with the raw amino-acid sequence, 362 residues long: Endopolygalacturonase II (362 aa).

A signal peptide spans 1–21 (MHSFASLLAYGLVAGATFASA). Residues 22-27 (SPIEAR) constitute a propeptide that is removed on maturation. A disulfide bond links C30 and C45. The stretch at 156-186 (ANDITFTDVTINNADGDTQGGHNTDAFDVGN) is one PbH1 1 repeat. The Proton donor role is filled by D201. An intrachain disulfide couples C203 to C219. PbH1 repeat units follow at residues 209 to 229 (GENI…SIGS), 238 to 259 (VKNV…RIKT), 267 to 289 (VSEI…VIQQ), and 301 to 322 (TNGV…DSGA). Residue H223 is part of the active site. The N-linked (GlcNAc...) (high mannose) asparagine glycan is linked to N240. Intrachain disulfides connect C329/C334 and C353/C362.

The protein belongs to the glycosyl hydrolase 28 family.

The protein localises to the secreted. It catalyses the reaction (1,4-alpha-D-galacturonosyl)n+m + H2O = (1,4-alpha-D-galacturonosyl)n + (1,4-alpha-D-galacturonosyl)m.. Its function is as follows. Involved in maceration and soft-rotting of plant tissue. Hydrolyzes the 1,4-alpha glycosidic bonds of de-esterified pectate in the smooth region of the plant cell wall. This Aspergillus niger (strain ATCC 1015 / CBS 113.46 / FGSC A1144 / LSHB Ac4 / NCTC 3858a / NRRL 328 / USDA 3528.7) protein is Endopolygalacturonase II (pgaII).